The sequence spans 341 residues: Tetraacyldisaccharide 4'-kinase (341 aa).

ATP is bound at residue 54-61 (TVGGAGKT).

It belongs to the LpxK family.

It catalyses the reaction a lipid A disaccharide + ATP = a lipid IVA + ADP + H(+). The protein operates within glycolipid biosynthesis; lipid IV(A) biosynthesis; lipid IV(A) from (3R)-3-hydroxytetradecanoyl-[acyl-carrier-protein] and UDP-N-acetyl-alpha-D-glucosamine: step 6/6. In terms of biological role, transfers the gamma-phosphate of ATP to the 4'-position of a tetraacyldisaccharide 1-phosphate intermediate (termed DS-1-P) to form tetraacyldisaccharide 1,4'-bis-phosphate (lipid IVA). The protein is Tetraacyldisaccharide 4'-kinase of Brucella melitensis biotype 2 (strain ATCC 23457).